Consider the following 388-residue polypeptide: Alanine racemase 2 (388 aa).

Lys-39 acts as the Proton acceptor; specific for D-alanine in catalysis. An N6-(pyridoxal phosphate)lysine modification is found at Lys-39. Arg-137 provides a ligand contact to substrate. Residue Tyr-267 is the Proton acceptor; specific for L-alanine of the active site. A substrate-binding site is contributed by Met-315.

Belongs to the alanine racemase family. The cofactor is pyridoxal 5'-phosphate.

It catalyses the reaction L-alanine = D-alanine. Its pathway is amino-acid biosynthesis; D-alanine biosynthesis; D-alanine from L-alanine: step 1/1. Its function is as follows. Catalyzes the interconversion of L-alanine and D-alanine. May also act on other amino acids. This Caldanaerobacter subterraneus subsp. tengcongensis (strain DSM 15242 / JCM 11007 / NBRC 100824 / MB4) (Thermoanaerobacter tengcongensis) protein is Alanine racemase 2 (alr2).